The chain runs to 90 residues: MDVSSKVVVQVLLLALVVQVTLCQHWSYGWLPGGKRSVGELEATIRMMGTGRVVSLPEDASAQTQERLRQYNLINDGSTYFDRKKRFMSQ.

Positions 1–23 are cleaved as a signal peptide; it reads MDVSSKVVVQVLLLALVVQVTLC. Glutamine 24 is subject to Pyrrolidone carboxylic acid. A Glycine amide modification is found at glycine 33.

The protein belongs to the GnRH family. As to expression, expressed in neuron cell bodies of the nucleus olfactoretinalis.

It is found in the secreted. In terms of biological role, stimulates the secretion of gonadotropins. The sequence is that of Progonadoliberin-3 (gnrh3) from Oryzias latipes (Japanese rice fish).